The following is a 149-amino-acid chain: DnaJ homolog subfamily C member 24 (149 aa).

Residues 11 to 82 form the J domain; that stretch reads DWYSILGADP…ETKREYDLQR (72 aa). One can recognise a DPH-type MB domain in the interval 93–148; the sequence is VDAQVYLEEMSWNEGDHSFYLSCRCGGKYSVSKDEAEEVSLISCDTCSLIIELLHY. Residues Cys115, Cys117, Cys136, and Cys139 each contribute to the Zn(2+) site.

The protein belongs to the DPH4 family. Monomer and homooligomer. Iron binding promotes oligomerization.

It localises to the cytoplasm. It is found in the cytoskeleton. Its pathway is protein modification; peptidyl-diphthamide biosynthesis. In terms of biological role, stimulates the ATPase activity of several Hsp70-type chaperones. This ability is enhanced by iron-binding. The iron-bound form is redox-active and can function as electron carrier. Plays a role in the diphthamide biosynthesis, a post-translational modification of histidine which occurs in translation elongation factor 2 (EEF2) which can be ADP-ribosylated by diphtheria toxin and by Pseudomonas exotoxin A (Eta). The polypeptide is DnaJ homolog subfamily C member 24 (Homo sapiens (Human)).